The following is a 129-amino-acid chain: Transcription antitermination protein NusB (129 aa).

The protein belongs to the NusB family.

Its function is as follows. Involved in transcription antitermination. Required for transcription of ribosomal RNA (rRNA) genes. Binds specifically to the boxA antiterminator sequence of the ribosomal RNA (rrn) operons. In Staphylococcus epidermidis (strain ATCC 35984 / DSM 28319 / BCRC 17069 / CCUG 31568 / BM 3577 / RP62A), this protein is Transcription antitermination protein NusB.